The primary structure comprises 476 residues: Lactate utilization protein B (476 aa).

4Fe-4S ferredoxin-type domains are found at residues 304–334 and 353–382; these read GTEF…GHSY and YDDY…LHEL. Residues Cys313, Cys316, Cys319, Cys323, Cys366, Cys369, and Cys373 each coordinate [4Fe-4S] cluster.

The protein belongs to the LutB/YkgF family.

In terms of biological role, is involved in L-lactate degradation and allows cells to grow with lactate as the sole carbon source. Has probably a role as an electron transporter during oxidation of L-lactate. The polypeptide is Lactate utilization protein B (Geobacillus thermodenitrificans (strain NG80-2)).